Consider the following 445-residue polypeptide: 3-phosphoshikimate 1-carboxyvinyltransferase (445 aa).

3-phosphoshikimate is bound by residues Lys28, Ser29, and Arg33. A phosphoenolpyruvate-binding site is contributed by Lys28. Phosphoenolpyruvate-binding residues include Gly102 and Arg130. 5 residues coordinate 3-phosphoshikimate: Ser179, Ser180, Gln181, Glu330, and His357. Position 181 (Gln181) interacts with phosphoenolpyruvate. The active-site Proton acceptor is the Glu330. Arg361, Arg405, and Lys430 together coordinate phosphoenolpyruvate.

It belongs to the EPSP synthase family. As to quaternary structure, monomer.

The protein localises to the cytoplasm. The catalysed reaction is 3-phosphoshikimate + phosphoenolpyruvate = 5-O-(1-carboxyvinyl)-3-phosphoshikimate + phosphate. The protein operates within metabolic intermediate biosynthesis; chorismate biosynthesis; chorismate from D-erythrose 4-phosphate and phosphoenolpyruvate: step 6/7. Functionally, catalyzes the transfer of the enolpyruvyl moiety of phosphoenolpyruvate (PEP) to the 5-hydroxyl of shikimate-3-phosphate (S3P) to produce enolpyruvyl shikimate-3-phosphate and inorganic phosphate. The polypeptide is 3-phosphoshikimate 1-carboxyvinyltransferase (Bifidobacterium longum (strain DJO10A)).